The following is a 122-amino-acid chain: Putative TLX1 neighbor protein (122 aa).

Residues 21–122 form a disordered region; sequence SLLSQEAMGP…LGGGRGQRGQ (102 aa). The span at 113–122 shows a compositional bias: gly residues; sequence LGGGRGQRGQ.

The chain is Putative TLX1 neighbor protein (TLX1NB) from Homo sapiens (Human).